Consider the following 103-residue polypeptide: Entry-fusion complex protein OPG086 (103 aa).

A helical; Signal-anchor transmembrane segment spans residues 1–21 (MTLFLVIFFILFLLLCYFFSF). Residues 22–103 (KRTNKMEIGI…KLVPTLLLSK (82 aa)) lie on the Virion surface side of the membrane.

This sequence belongs to the orthopoxvirus OPG086 family. Interacts with OPG099/L5. Component of the entry fusion complex (EFC) composed of OPG053, OPG076, OPG086, OPG094, OPG095, OPG099, OPG107, OPG143, OPG104, OPG147 and OPG155. Except for OPG095 and OPG053, each of the EFC proteins is required for assembly or stability of the complex. Unglycosylated because produced in viral factories instead of the classic ER -Golgi route.

The protein localises to the virion membrane. Component of the entry fusion complex (EFC), which consists of 11 proteins. During cell infection, this complex mediates entry of the virion core into the host cytoplasm by a two-step mechanism consisting of lipid mixing of the viral and cellular membranes and subsequent pore formation. The polypeptide is Entry-fusion complex protein OPG086 (OPG086) (Vertebrata (FPV)).